We begin with the raw amino-acid sequence, 392 residues long: Succinate--CoA ligase [ADP-forming] subunit beta (392 aa).

The ATP-grasp domain occupies 9-247 (KAILRKYGVA…VTEEDPLEVE (239 aa)). ATP contacts are provided by residues Lys49, 56 to 58 (GRG), Glu102, Leu105, and Glu110. Residues Asn202 and Asp216 each contribute to the Mg(2+) site. Substrate-binding positions include Asn267 and 324–326 (GIL).

It belongs to the succinate/malate CoA ligase beta subunit family. In terms of assembly, heterotetramer of two alpha and two beta subunits. It depends on Mg(2+) as a cofactor.

It catalyses the reaction succinate + ATP + CoA = succinyl-CoA + ADP + phosphate. The catalysed reaction is GTP + succinate + CoA = succinyl-CoA + GDP + phosphate. Its pathway is carbohydrate metabolism; tricarboxylic acid cycle; succinate from succinyl-CoA (ligase route): step 1/1. Succinyl-CoA synthetase functions in the citric acid cycle (TCA), coupling the hydrolysis of succinyl-CoA to the synthesis of either ATP or GTP and thus represents the only step of substrate-level phosphorylation in the TCA. The beta subunit provides nucleotide specificity of the enzyme and binds the substrate succinate, while the binding sites for coenzyme A and phosphate are found in the alpha subunit. This chain is Succinate--CoA ligase [ADP-forming] subunit beta, found in Koribacter versatilis (strain Ellin345).